Reading from the N-terminus, the 491-residue chain is Sodium-dependent glucose transporter 1 (491 aa).

11 helical membrane passes run 26 to 46, 52 to 72, 81 to 101, 119 to 139, 165 to 185, 210 to 230, 255 to 275, 277 to 297, 303 to 323, 338 to 358, and 365 to 385; these read FIFV…GILF, HLLL…VPWC, VMSV…IIIL, FALG…FLPL, LSYI…FILF, AVIF…VAYG, LFWG…TCLY, GTML…LVLF, LLWV…PSGF, SLFV…VGYL, and FPVL…LFPV. Disordered regions lie at residues 397–425 and 438–491; these read AQYN…DEAQ and NDQM…EKND. A compositionally biased stretch (acidic residues) spans 416 to 425; that stretch reads MEEEDEDEAQ. The segment covering 440 to 458 has biased composition (polar residues); that stretch reads QMKNSVTVISEDTPGNSAP.

Belongs to the major facilitator superfamily.

The protein localises to the apical cell membrane. Functionally, may function as a sodium-dependent glucose transporter. Potential channels for urea in the inner medulla of kidney. This chain is Sodium-dependent glucose transporter 1 (mfsd4b), found in Xenopus laevis (African clawed frog).